The sequence spans 166 residues: Endoribonuclease YbeY (166 aa).

Positions 132, 136, and 142 each coordinate Zn(2+).

The protein belongs to the endoribonuclease YbeY family. It depends on Zn(2+) as a cofactor.

The protein localises to the cytoplasm. In terms of biological role, single strand-specific metallo-endoribonuclease involved in late-stage 70S ribosome quality control and in maturation of the 3' terminus of the 16S rRNA. In Clostridium botulinum (strain 657 / Type Ba4), this protein is Endoribonuclease YbeY.